The following is a 397-amino-acid chain: Pectate lyase 4 (397 aa).

Residues 1–25 (MGIKHCCYILYFTLALVTLVQAGRL) form the signal peptide. Asn-36 carries an N-linked (GlcNAc...) asparagine glycan. Cys-54 and Cys-71 are disulfide-bonded. 3 PbH1 repeats span residues 159–202 (VKNV…HVTG), 203–224 (SSDIWIDHCTLSKSFDGLVDVN), and 227–248 (STGVTISNCKFTHHEKAVLLGA). Positions 194, 218, and 222 each coordinate Ca(2+). Residue Arg-274 is part of the active site.

Belongs to the polysaccharide lyase 1 family. Amb a subfamily. In terms of assembly, monomer. Ca(2+) is required as a cofactor. Post-translationally, the N-terminus is blocked. As to expression, pollen and flowers.

It carries out the reaction Eliminative cleavage of (1-&gt;4)-alpha-D-galacturonan to give oligosaccharides with 4-deoxy-alpha-D-galact-4-enuronosyl groups at their non-reducing ends.. It functions in the pathway glycan metabolism; pectin degradation; 2-dehydro-3-deoxy-D-gluconate from pectin: step 2/5. Has pectate lyase activity. This Ambrosia artemisiifolia (Common ragweed) protein is Pectate lyase 4.